The chain runs to 410 residues: Elongation factor Tu (410 aa).

Residues 10–219 enclose the tr-type G domain; that stretch reads KTHVNVGTIG…ALDTYIPDPV (210 aa). Residues 19–26, 88–92, and 143–146 contribute to the GTP site; these read GHVDHGKT, DCPGH, and NKCD. Residue Thr-26 participates in Mg(2+) binding.

It belongs to the TRAFAC class translation factor GTPase superfamily. Classic translation factor GTPase family. EF-Tu/EF-1A subfamily. As to quaternary structure, monomer.

The protein resides in the cytoplasm. It carries out the reaction GTP + H2O = GDP + phosphate + H(+). Its function is as follows. GTP hydrolase that promotes the GTP-dependent binding of aminoacyl-tRNA to the A-site of ribosomes during protein biosynthesis. The protein is Elongation factor Tu of Brachyspira hyodysenteriae (Treponema hyodysenteriae).